We begin with the raw amino-acid sequence, 854 residues long: Glucans biosynthesis glucosyltransferase H (854 aa).

7 helical membrane-spanning segments follow: residues 155–175 (ILLA…KTIL), 209–229 (ILVL…TALM), 528–548 (VFLT…FLVL), 583–603 (IALF…SVIL), 619–639 (FLSL…RMLF), 671–691 (FVRH…MAWL), and 695–715 (FLWW…VSVY).

It belongs to the glycosyltransferase 2 family. OpgH subfamily.

Its subcellular location is the cell inner membrane. It participates in glycan metabolism; osmoregulated periplasmic glucan (OPG) biosynthesis. In terms of biological role, involved in the biosynthesis of osmoregulated periplasmic glucans (OPGs). The chain is Glucans biosynthesis glucosyltransferase H from Pectobacterium atrosepticum (strain SCRI 1043 / ATCC BAA-672) (Erwinia carotovora subsp. atroseptica).